Reading from the N-terminus, the 297-residue chain is Phosphatidylserine decarboxylase proenzyme (297 aa).

Catalysis depends on charge relay system; for autoendoproteolytic cleavage activity residues Asp100, His157, and Ser263. Residue Ser263 is the Schiff-base intermediate with substrate; via pyruvic acid; for decarboxylase activity of the active site. The residue at position 263 (Ser263) is a Pyruvic acid (Ser); by autocatalysis.

This sequence belongs to the phosphatidylserine decarboxylase family. PSD-B subfamily. Prokaryotic type I sub-subfamily. In terms of assembly, heterodimer of a large membrane-associated beta subunit and a small pyruvoyl-containing alpha subunit. It depends on pyruvate as a cofactor. Is synthesized initially as an inactive proenzyme. Formation of the active enzyme involves a self-maturation process in which the active site pyruvoyl group is generated from an internal serine residue via an autocatalytic post-translational modification. Two non-identical subunits are generated from the proenzyme in this reaction, and the pyruvate is formed at the N-terminus of the alpha chain, which is derived from the carboxyl end of the proenzyme. The autoendoproteolytic cleavage occurs by a canonical serine protease mechanism, in which the side chain hydroxyl group of the serine supplies its oxygen atom to form the C-terminus of the beta chain, while the remainder of the serine residue undergoes an oxidative deamination to produce ammonia and the pyruvoyl prosthetic group on the alpha chain. During this reaction, the Ser that is part of the protease active site of the proenzyme becomes the pyruvoyl prosthetic group, which constitutes an essential element of the active site of the mature decarboxylase.

It is found in the cell membrane. The catalysed reaction is a 1,2-diacyl-sn-glycero-3-phospho-L-serine + H(+) = a 1,2-diacyl-sn-glycero-3-phosphoethanolamine + CO2. The protein operates within phospholipid metabolism; phosphatidylethanolamine biosynthesis; phosphatidylethanolamine from CDP-diacylglycerol: step 2/2. In terms of biological role, catalyzes the formation of phosphatidylethanolamine (PtdEtn) from phosphatidylserine (PtdSer). The protein is Phosphatidylserine decarboxylase proenzyme of Haemophilus ducreyi (strain 35000HP / ATCC 700724).